We begin with the raw amino-acid sequence, 162 residues long: NADH-quinone oxidoreductase subunit I (162 aa).

4Fe-4S ferredoxin-type domains follow at residues 54–83 (RRYE…IESE) and 93–122 (TRYD…ETQI). [4Fe-4S] cluster contacts are provided by Cys-63, Cys-66, Cys-69, Cys-73, Cys-102, Cys-105, Cys-108, and Cys-112.

The protein belongs to the complex I 23 kDa subunit family. In terms of assembly, NDH-1 is composed of 14 different subunits. Subunits NuoA, H, J, K, L, M, N constitute the membrane sector of the complex. Requires [4Fe-4S] cluster as cofactor.

The protein resides in the cell inner membrane. The catalysed reaction is a quinone + NADH + 5 H(+)(in) = a quinol + NAD(+) + 4 H(+)(out). Its function is as follows. NDH-1 shuttles electrons from NADH, via FMN and iron-sulfur (Fe-S) centers, to quinones in the respiratory chain. The immediate electron acceptor for the enzyme in this species is believed to be ubiquinone. Couples the redox reaction to proton translocation (for every two electrons transferred, four hydrogen ions are translocated across the cytoplasmic membrane), and thus conserves the redox energy in a proton gradient. The protein is NADH-quinone oxidoreductase subunit I of Burkholderia pseudomallei (strain 668).